The following is a 140-amino-acid chain: Small ribosomal subunit protein uS12 (140 aa).

The interval 1–28 (MPTINQLVRKSRKALEKKSTAPALQKGY) is disordered. Residue Asp-102 is modified to 3-methylthioaspartic acid. The disordered stretch occupies residues 119–140 (GVDKRRQSRSKYGAKRPKEAKK). A compositionally biased stretch (basic residues) spans 124–140 (RQSRSKYGAKRPKEAKK).

It belongs to the universal ribosomal protein uS12 family. Part of the 30S ribosomal subunit. Contacts proteins S8 and S17. May interact with IF1 in the 30S initiation complex.

With S4 and S5 plays an important role in translational accuracy. Functionally, interacts with and stabilizes bases of the 16S rRNA that are involved in tRNA selection in the A site and with the mRNA backbone. Located at the interface of the 30S and 50S subunits, it traverses the body of the 30S subunit contacting proteins on the other side and probably holding the rRNA structure together. The combined cluster of proteins S8, S12 and S17 appears to hold together the shoulder and platform of the 30S subunit. The protein is Small ribosomal subunit protein uS12 of Clostridioides difficile (strain 630) (Peptoclostridium difficile).